The chain runs to 74 residues: Brevinin-2MT1 (74 aa).

Positions 1 to 22 (MFTMKKSLLVLFFLGTISLSLC) are cleaved as a signal peptide. Positions 23–39 (EEERNADEDDGEMTEEE) are cleaved as a propeptide — removed in mature form. Cysteine 68 and cysteine 74 are disulfide-bonded.

Belongs to the frog skin active peptide (FSAP) family. Brevinin subfamily. Expressed by the skin glands.

Its subcellular location is the secreted. Its function is as follows. Antimicrobial peptide. Active against a variety of Gram-negative and Gram-positive bacterial strains. Active against fungi. Shows hemolytic activity against human erythrocytes. The protein is Brevinin-2MT1 of Amolops mantzorum (Sichuan torrent frog).